Reading from the N-terminus, the 360-residue chain is Peptide chain release factor 1 (360 aa).

Gln-235 carries the N5-methylglutamine modification. The segment covering 285–295 has biased composition (basic and acidic residues); it reads RQAAEQADTRR. A disordered region spans residues 285-309; sequence RQAAEQADTRRNLLGSGDRSDKIRT.

Belongs to the prokaryotic/mitochondrial release factor family. Post-translationally, methylated by PrmC. Methylation increases the termination efficiency of RF1.

Its subcellular location is the cytoplasm. Functionally, peptide chain release factor 1 directs the termination of translation in response to the peptide chain termination codons UAG and UAA. This is Peptide chain release factor 1 from Actinobacillus pleuropneumoniae serotype 7 (strain AP76).